The chain runs to 430 residues: Adenylosuccinate synthetase (430 aa).

Residues 13-19 and 41-43 contribute to the GTP site; these read GDEGKGK and GHT. The Proton acceptor role is filled by aspartate 14. Mg(2+) is bound by residues aspartate 14 and glycine 41. IMP-binding positions include 14 to 17, 39 to 42, threonine 130, arginine 144, glutamine 225, threonine 240, and arginine 304; these read DEGK and NAGH. Histidine 42 serves as the catalytic Proton donor. 300 to 306 is a binding site for substrate; the sequence is STTGRAR. GTP contacts are provided by residues arginine 306, 332 to 334, and 414 to 416; these read KLD and STG.

Belongs to the adenylosuccinate synthetase family. In terms of assembly, homodimer. Requires Mg(2+) as cofactor.

It is found in the cytoplasm. The catalysed reaction is IMP + L-aspartate + GTP = N(6)-(1,2-dicarboxyethyl)-AMP + GDP + phosphate + 2 H(+). Its pathway is purine metabolism; AMP biosynthesis via de novo pathway; AMP from IMP: step 1/2. Plays an important role in the de novo pathway of purine nucleotide biosynthesis. Catalyzes the first committed step in the biosynthesis of AMP from IMP. This is Adenylosuccinate synthetase from Thioalkalivibrio sulfidiphilus (strain HL-EbGR7).